Reading from the N-terminus, the 496-residue chain is Splicing factor U2AF 65 kDa subunit (496 aa).

A compositionally biased stretch (basic and acidic residues) spans 1–26 (MSDHQDGMKLEDIERQFLDVAQREGG). Positions 1-142 (MSDHQDGMKL…PKKYRFWDVP (142 aa)) are disordered. A compositionally biased stretch (basic residues) spans 59-77 (KKRKRSRSRDRDTRRRSRS). Basic and acidic residues-rich tracts occupy residues 78–96 (RDRG…DRSR) and 105–138 (GGRD…KYRF). RRM domains follow at residues 184 to 266 (RRLY…RPRD), 291 to 368 (NKIF…LACA), and 404 to 488 (NMVT…YYDV).

As to quaternary structure, forms a heterodimer with the U2AF small subunit.

The protein localises to the nucleus. Functionally, necessary for the splicing of pre-mRNA. Binds to the polypyrimidine tract of introns early during spliceosome assembly. This is Splicing factor U2AF 65 kDa subunit (uaf-1) from Caenorhabditis elegans.